A 61-amino-acid chain; its full sequence is Small ribosomal subunit protein bS21 (61 aa).

This sequence belongs to the bacterial ribosomal protein bS21 family.

The sequence is that of Small ribosomal subunit protein bS21 from Methylacidiphilum infernorum (isolate V4) (Methylokorus infernorum (strain V4)).